Here is a 139-residue protein sequence, read N- to C-terminus: Transcription antitermination protein NusB (139 aa).

Belongs to the NusB family.

Its function is as follows. Involved in transcription antitermination. Required for transcription of ribosomal RNA (rRNA) genes. Binds specifically to the boxA antiterminator sequence of the ribosomal RNA (rrn) operons. This chain is Transcription antitermination protein NusB, found in Nitratiruptor sp. (strain SB155-2).